Here is a 220-residue protein sequence, read N- to C-terminus: Adenylate kinase (220 aa).

10–15 (GAGKGT) contributes to the ATP binding site. Residues 30–59 (STGDMLRAAVKAGTPLGVEAKGYMDAGKLV) are NMP. AMP-binding positions include Thr-31, Arg-36, 57-59 (KLV), 85-88 (GFPR), and Gln-92. The LID stretch occupies residues 122-159 (GRRTHPASGRTYHVKFNPPKVEGHDDVTGEPLIQRDDD). ATP-binding positions include Arg-123 and 132–133 (TY). AMP is bound by residues Arg-156 and Arg-167. Gly-206 contacts ATP.

Belongs to the adenylate kinase family. As to quaternary structure, monomer.

Its subcellular location is the cytoplasm. It carries out the reaction AMP + ATP = 2 ADP. Its pathway is purine metabolism; AMP biosynthesis via salvage pathway; AMP from ADP: step 1/1. Catalyzes the reversible transfer of the terminal phosphate group between ATP and AMP. Plays an important role in cellular energy homeostasis and in adenine nucleotide metabolism. In Burkholderia lata (strain ATCC 17760 / DSM 23089 / LMG 22485 / NCIMB 9086 / R18194 / 383), this protein is Adenylate kinase.